We begin with the raw amino-acid sequence, 166 residues long: NAD(P)H-quinone oxidoreductase subunit I, chloroplastic (166 aa).

4Fe-4S ferredoxin-type domains are found at residues 55 to 84 and 95 to 124; these read GRIH…VDWK and LNYS…MTEE. Residues C64, C67, C70, C74, C104, C107, C110, and C114 each contribute to the [4Fe-4S] cluster site.

It belongs to the complex I 23 kDa subunit family. As to quaternary structure, NDH is composed of at least 16 different subunits, 5 of which are encoded in the nucleus. The cofactor is [4Fe-4S] cluster.

It localises to the plastid. It is found in the chloroplast thylakoid membrane. The catalysed reaction is a plastoquinone + NADH + (n+1) H(+)(in) = a plastoquinol + NAD(+) + n H(+)(out). It carries out the reaction a plastoquinone + NADPH + (n+1) H(+)(in) = a plastoquinol + NADP(+) + n H(+)(out). Its function is as follows. NDH shuttles electrons from NAD(P)H:plastoquinone, via FMN and iron-sulfur (Fe-S) centers, to quinones in the photosynthetic chain and possibly in a chloroplast respiratory chain. The immediate electron acceptor for the enzyme in this species is believed to be plastoquinone. Couples the redox reaction to proton translocation, and thus conserves the redox energy in a proton gradient. This chain is NAD(P)H-quinone oxidoreductase subunit I, chloroplastic, found in Oteiza scandens (Climbing oteiza).